Consider the following 421-residue polypeptide: Serine--tRNA ligase (421 aa).

Position 230 to 232 (230 to 232) interacts with L-serine; it reads TAE. 259–261 contributes to the ATP binding site; sequence RRE. Residue Glu282 coordinates L-serine. 346–349 contributes to the ATP binding site; sequence EISS. Ser380 lines the L-serine pocket.

This sequence belongs to the class-II aminoacyl-tRNA synthetase family. Type-1 seryl-tRNA synthetase subfamily. Homodimer. The tRNA molecule binds across the dimer.

It localises to the cytoplasm. The catalysed reaction is tRNA(Ser) + L-serine + ATP = L-seryl-tRNA(Ser) + AMP + diphosphate + H(+). The enzyme catalyses tRNA(Sec) + L-serine + ATP = L-seryl-tRNA(Sec) + AMP + diphosphate + H(+). Its pathway is aminoacyl-tRNA biosynthesis; selenocysteinyl-tRNA(Sec) biosynthesis; L-seryl-tRNA(Sec) from L-serine and tRNA(Sec): step 1/1. Its function is as follows. Catalyzes the attachment of serine to tRNA(Ser). Is also able to aminoacylate tRNA(Sec) with serine, to form the misacylated tRNA L-seryl-tRNA(Sec), which will be further converted into selenocysteinyl-tRNA(Sec). The protein is Serine--tRNA ligase of Methanosarcina acetivorans (strain ATCC 35395 / DSM 2834 / JCM 12185 / C2A).